We begin with the raw amino-acid sequence, 147 residues long: 3-hydroxyacyl-[acyl-carrier-protein] dehydratase FabZ (147 aa).

The active site involves His-49.

It belongs to the thioester dehydratase family. FabZ subfamily.

It localises to the cytoplasm. The enzyme catalyses a (3R)-hydroxyacyl-[ACP] = a (2E)-enoyl-[ACP] + H2O. Involved in unsaturated fatty acids biosynthesis. Catalyzes the dehydration of short chain beta-hydroxyacyl-ACPs and long chain saturated and unsaturated beta-hydroxyacyl-ACPs. The sequence is that of 3-hydroxyacyl-[acyl-carrier-protein] dehydratase FabZ from Alkaliphilus metalliredigens (strain QYMF).